The chain runs to 347 residues: Quinolinate synthase (347 aa).

2 residues coordinate iminosuccinate: His-47 and Ser-68. Cys-113 lines the [4Fe-4S] cluster pocket. Residues 139–141 (YAN) and Ser-156 contribute to the iminosuccinate site. [4Fe-4S] cluster is bound at residue Cys-200. Iminosuccinate contacts are provided by residues 226-228 (HPE) and Thr-243. Cys-297 is a binding site for [4Fe-4S] cluster.

This sequence belongs to the quinolinate synthase family. Type 1 subfamily. The cofactor is [4Fe-4S] cluster.

The protein localises to the cytoplasm. It catalyses the reaction iminosuccinate + dihydroxyacetone phosphate = quinolinate + phosphate + 2 H2O + H(+). The protein operates within cofactor biosynthesis; NAD(+) biosynthesis; quinolinate from iminoaspartate: step 1/1. Functionally, catalyzes the condensation of iminoaspartate with dihydroxyacetone phosphate to form quinolinate. This Escherichia coli O9:H4 (strain HS) protein is Quinolinate synthase.